Reading from the N-terminus, the 919-residue chain is Chitin synthase 1 (919 aa).

Disordered regions lie at residues 1-69 (MSYD…SFQT) and 109-134 (NLAS…ALGP). Residues 11 to 30 (GQGRDYARQQRQQRSYQLSD) show a composition bias toward low complexity. Residues asparagine 187 and asparagine 556 are each glycosylated (N-linked (GlcNAc...) asparagine). Helical transmembrane passes span 594–614 (IVLL…SIII), 630–650 (LVVF…FLVL), 668–688 (IASF…SLWL), 713–733 (VLIA…ILYA), 742–762 (FPQY…YAFC), 843–863 (LVAF…NVNG), and 887–919 (IILW…FRKT).

This sequence belongs to the chitin synthase family. Class III subfamily.

The protein localises to the cell membrane. Its subcellular location is the cytoplasmic vesicle membrane. It carries out the reaction [(1-&gt;4)-N-acetyl-beta-D-glucosaminyl](n) + UDP-N-acetyl-alpha-D-glucosamine = [(1-&gt;4)-N-acetyl-beta-D-glucosaminyl](n+1) + UDP + H(+). Its function is as follows. Polymerizes chitin, a structural polymer of the cell wall and septum, by transferring the sugar moiety of UDP-GlcNAc to the non-reducing end of the growing chitin polymer. This is Chitin synthase 1 from Mycosarcoma maydis (Corn smut fungus).